A 298-amino-acid chain; its full sequence is Protoheme IX farnesyltransferase (298 aa).

The next 8 helical transmembrane spans lie at 16-36, 45-65, 97-117, 141-161, 172-192, 223-243, 244-264, and 277-297; these read VVAL…PGMP, ALGF…NQLL, VLIV…TAVL, IVIG…AVTG, SLLV…LAIF, VLLA…VFYL, GGAV…LDPP, and VVYL…LPWV.

Belongs to the UbiA prenyltransferase family. Protoheme IX farnesyltransferase subfamily.

The protein resides in the cell inner membrane. It catalyses the reaction heme b + (2E,6E)-farnesyl diphosphate + H2O = Fe(II)-heme o + diphosphate. Its pathway is porphyrin-containing compound metabolism; heme O biosynthesis; heme O from protoheme: step 1/1. In terms of biological role, converts heme B (protoheme IX) to heme O by substitution of the vinyl group on carbon 2 of heme B porphyrin ring with a hydroxyethyl farnesyl side group. The protein is Protoheme IX farnesyltransferase of Xanthomonas campestris pv. campestris (strain 8004).